The sequence spans 300 residues: D-alanine--D-alanine ligase (300 aa).

Positions 99-293 (KKILKYANIN…FAELLNSIVK (195 aa)) constitute an ATP-grasp domain. 126-181 (IEKIGYPVFVKPNSGGSSVATNLVKDGDGIKEAVELALKYDKEVMIENYTKGEEIT) contributes to the ATP binding site. The Mg(2+) site is built by Asp248, Glu260, and Asn262.

It belongs to the D-alanine--D-alanine ligase family. Requires Mg(2+) as cofactor. Mn(2+) serves as cofactor.

The protein resides in the cytoplasm. The catalysed reaction is 2 D-alanine + ATP = D-alanyl-D-alanine + ADP + phosphate + H(+). The protein operates within cell wall biogenesis; peptidoglycan biosynthesis. Functionally, cell wall formation. The chain is D-alanine--D-alanine ligase from Clostridium botulinum (strain 657 / Type Ba4).